Consider the following 456-residue polypeptide: MVKLVCAIVGVAGSAFPVDTDASQLVGDLKKAIKAENAMTFTGDAKDLQLFLAKQPVDDESGKEVVPVYRPSAEEMKEESFKWLPDEHRAALKLVEGESDDYIHALTAGEPILGSKTLTTWFYTKNNMELPSSEQIHVLVVVPDGAGGSASDTSRMDRLFDKVDKVYEHTVLSKRTRYVHSEMNSAKGNILLNDLKIRISPVDTVKFAGGVPTPAKEFKWKSDRTEEQQKEPYREYVVANIGDVLTNNKLCVVGVEKGVNILTVEVPGRDIVLAGRTDMIVLSDIAQKFPHYLPHLPGVRMLIEVKKVVTTASEFQALSELIALDIIATESVMALLTNLTNHWQFFWVSRKSDDRVIIETTTLIAPGEAFAVIRTLLDQSPSAGAEVSLPCFEKPVKRQKLSQLLPSISEASGSSGIRESIERYYDIASMLGPDLEMARAVASQVARSIPTLSYFS.

A signal peptide spans 1-17 (MVKLVCAIVGVAGSAFP). The LQLFLAK domain stretch occupies residues 18–54 (VDTDASQLVGDLKKAIKAENAMTFTGDAKDLQLFLAK). The DWL domain stretch occupies residues 55–136 (QPVDDESGKE…NMELPSSEQI (82 aa)). Residues 137-143 (HVLVVVP) carry the HVLVXXP motif motif. N-linked (GlcNAc...) asparagine glycosylation occurs at N338.

The protein belongs to the Crinkler effector family.

Its subcellular location is the secreted. The protein localises to the host nucleus. Its function is as follows. Secreted effector that effector that induces cell death when expressed in host plants. Induces the expression of defense response genes in tomato. The chain is Crinkler effector protein 2 from Phytophthora infestans (Potato late blight agent).